The following is a 442-amino-acid chain: UDP-N-acetylmuramoylalanine--D-glutamate ligase (442 aa).

ATP is bound at residue glycine 115–threonine 121.

This sequence belongs to the MurCDEF family.

The protein resides in the cytoplasm. The catalysed reaction is UDP-N-acetyl-alpha-D-muramoyl-L-alanine + D-glutamate + ATP = UDP-N-acetyl-alpha-D-muramoyl-L-alanyl-D-glutamate + ADP + phosphate + H(+). It participates in cell wall biogenesis; peptidoglycan biosynthesis. Functionally, cell wall formation. Catalyzes the addition of glutamate to the nucleotide precursor UDP-N-acetylmuramoyl-L-alanine (UMA). This chain is UDP-N-acetylmuramoylalanine--D-glutamate ligase, found in Aliivibrio salmonicida (strain LFI1238) (Vibrio salmonicida (strain LFI1238)).